The primary structure comprises 89 residues: Cell division protein FtsL (89 aa).

Topologically, residues 1 to 6 (MAMNKL) are cytoplasmic. The chain crosses the membrane as a helical span at residues 7–24 (NFLLLLAVCVSAFSVVMQ). Residues 25-89 (QNQYRLNFTA…GNTFMVEHQR (65 aa)) lie on the Periplasmic side of the membrane. Positions 33–73 (TALDKAKKQEIALEQDYAQMRLQQARLANHEAIRAAAEKQN) form a coiled coil.

Belongs to the FtsL family. As to quaternary structure, part of a complex composed of FtsB, FtsL and FtsQ.

Its subcellular location is the cell inner membrane. Functionally, essential cell division protein. May link together the upstream cell division proteins, which are predominantly cytoplasmic, with the downstream cell division proteins, which are predominantly periplasmic. The chain is Cell division protein FtsL from Neisseria meningitidis serogroup B (strain ATCC BAA-335 / MC58).